Here is a 1074-residue protein sequence, read N- to C-terminus: Isoleucine--tRNA ligase (1074 aa).

Residues 50 to 60 (PYTSGAAHMGT) carry the 'HIGH' region motif. The short motif at 605–609 (GMSKS) is the 'KMSKS' region element. ATP is bound at residue Lys608.

The protein belongs to the class-I aminoacyl-tRNA synthetase family. IleS type 2 subfamily. In terms of assembly, monomer. Requires Zn(2+) as cofactor.

Its subcellular location is the cytoplasm. The catalysed reaction is tRNA(Ile) + L-isoleucine + ATP = L-isoleucyl-tRNA(Ile) + AMP + diphosphate. Functionally, catalyzes the attachment of isoleucine to tRNA(Ile). As IleRS can inadvertently accommodate and process structurally similar amino acids such as valine, to avoid such errors it has two additional distinct tRNA(Ile)-dependent editing activities. One activity is designated as 'pretransfer' editing and involves the hydrolysis of activated Val-AMP. The other activity is designated 'posttransfer' editing and involves deacylation of mischarged Val-tRNA(Ile). The protein is Isoleucine--tRNA ligase of Haloarcula marismortui (strain ATCC 43049 / DSM 3752 / JCM 8966 / VKM B-1809) (Halobacterium marismortui).